Reading from the N-terminus, the 255-residue chain is MTNTQVTLVQLDNYGPWTVTPSPRREVDLQTLQSRLYADLSQAIGTRDGYVFFTRFDNMIAVTNGLDLEAHARVQESIRNRYPITASLSIGTGSTPADALVGATGALQQQGSAQDADRRETLLGQPIPDAERTDDDVQIAHFDVIDATGTYTDELDAFASFTHIEAGYAALMRHMHDAHDSLSFFVGGDNIIAVCPGLSDGDYEDAIAHVQDTADVALRVGVGRGASAHDAGMGAKHALEVAREHDTIVERSGRQ.

Belongs to the archaeal-type GTP cyclohydrolase family.

The catalysed reaction is GTP + 3 H2O = 2-amino-5-formylamino-6-(5-phospho-D-ribosylamino)pyrimidin-4(3H)-one + 2 phosphate + 2 H(+). In terms of biological role, catalyzes the formation of 2-amino-5-formylamino-6-ribofuranosylamino-4(3H)-pyrimidinone ribonucleotide monophosphate and inorganic phosphate from GTP. Also has an independent pyrophosphate phosphohydrolase activity. This Halobacterium salinarum (strain ATCC 700922 / JCM 11081 / NRC-1) (Halobacterium halobium) protein is GTP cyclohydrolase III 1 (gch31).